A 485-amino-acid polypeptide reads, in one-letter code: Glutamyl-tRNA(Gln) amidotransferase subunit A (485 aa).

Residues K78 and S153 each act as charge relay system in the active site. S177 acts as the Acyl-ester intermediate in catalysis.

Belongs to the amidase family. GatA subfamily. As to quaternary structure, heterotrimer of A, B and C subunits.

The catalysed reaction is L-glutamyl-tRNA(Gln) + L-glutamine + ATP + H2O = L-glutaminyl-tRNA(Gln) + L-glutamate + ADP + phosphate + H(+). Functionally, allows the formation of correctly charged Gln-tRNA(Gln) through the transamidation of misacylated Glu-tRNA(Gln) in organisms which lack glutaminyl-tRNA synthetase. The reaction takes place in the presence of glutamine and ATP through an activated gamma-phospho-Glu-tRNA(Gln). In Desulfatibacillum aliphaticivorans, this protein is Glutamyl-tRNA(Gln) amidotransferase subunit A.